A 176-amino-acid chain; its full sequence is Probable inosine/xanthosine triphosphatase (176 aa).

Asp36 contributes to the Mg(2+) binding site.

It belongs to the YjjX NTPase family. As to quaternary structure, homodimer. It depends on Mg(2+) as a cofactor. Requires Mn(2+) as cofactor.

It catalyses the reaction XTP + H2O = XDP + phosphate + H(+). The enzyme catalyses ITP + H2O = IDP + phosphate + H(+). Functionally, phosphatase that hydrolyzes non-canonical purine nucleotides such as XTP and ITP to their respective diphosphate derivatives. Probably excludes non-canonical purines from DNA/RNA precursor pool, thus preventing their incorporation into DNA/RNA and avoiding chromosomal lesions. This Saccharolobus islandicus (strain M.14.25 / Kamchatka #1) (Sulfolobus islandicus) protein is Probable inosine/xanthosine triphosphatase.